Here is a 127-residue protein sequence, read N- to C-terminus: Small ribosomal subunit protein uS11 (127 aa).

Belongs to the universal ribosomal protein uS11 family. Part of the 30S ribosomal subunit. Interacts with proteins S7 and S18. Binds to IF-3.

In terms of biological role, located on the platform of the 30S subunit, it bridges several disparate RNA helices of the 16S rRNA. Forms part of the Shine-Dalgarno cleft in the 70S ribosome. This is Small ribosomal subunit protein uS11 from Ruthia magnifica subsp. Calyptogena magnifica.